The primary structure comprises 179 residues: Replication restart protein DnaT (179 aa).

Residues 156-179 (GGLPKRDVNTVSEPDSQIPPGFRG) form a disordered region.

It belongs to the DnaT family. In terms of assembly, homooligomerizes. Interacts with PriB. Component of the replication restart primosome. Primosome assembly occurs via a 'hand-off' mechanism. PriA binds to replication forks, subsequently PriB then DnaT bind; DnaT then displaces ssDNA to generate the helicase loading substrate.

Its function is as follows. Involved in the restart of stalled replication forks, which reloads the replicative helicase on sites other than the origin of replication. Can function in multiple replication restart pathways. Displaces ssDNA from a PriB-ssDNA complex. Probably forms a spiral filament on ssDNA. The protein is Replication restart protein DnaT of Escherichia coli (strain ATCC 8739 / DSM 1576 / NBRC 3972 / NCIMB 8545 / WDCM 00012 / Crooks).